A 617-amino-acid polypeptide reads, in one-letter code: Electron transfer flavoprotein-ubiquinone oxidoreductase, mitochondrial (617 aa).

A mitochondrion-targeting transit peptide spans 1–33 (MLVPLAKLSCLAYQCFHALKIKKNYLPLCATRW). Residue 71-85 (VVIVGAGPAGLSAAV) participates in FAD binding. Position 96 is an N6-acetyllysine (Lys96). An intramembrane segment occupies 109 to 130 (IGAHTLSGACLDPGAFKELFPD). An N6-acetyllysine mark is found at Lys132 and Lys223. A ubiquinone is bound by residues Gly305 and Gly306. At Lys357 the chain carries N6-acetyllysine. The stretch at 428 to 447 (IGLHVTEYEDNLKNSWVWKE) is an intramembrane region. The residue at position 551 (Ser551) is a Phosphoserine. [4Fe-4S] cluster-binding residues include Cys561, Cys586, Cys589, and Cys592. The 4Fe-4S ferredoxin-type domain maps to 577–606 (FRLQINAQNCVHCKTCDIKDPSQNINWVVP).

This sequence belongs to the ETF-QO/FixC family. As to quaternary structure, monomer. The cofactor is [4Fe-4S] cluster. FAD is required as a cofactor.

The protein resides in the mitochondrion inner membrane. The catalysed reaction is a ubiquinone + reduced [electron-transfer flavoprotein] = a ubiquinol + oxidized [electron-transfer flavoprotein] + H(+). Accepts electrons from ETF and reduces ubiquinone. The chain is Electron transfer flavoprotein-ubiquinone oxidoreductase, mitochondrial from Homo sapiens (Human).